A 177-amino-acid chain; its full sequence is Large ribosomal subunit protein uL6 (177 aa).

Belongs to the universal ribosomal protein uL6 family. Part of the 50S ribosomal subunit.

Functionally, this protein binds to the 23S rRNA, and is important in its secondary structure. It is located near the subunit interface in the base of the L7/L12 stalk, and near the tRNA binding site of the peptidyltransferase center. This chain is Large ribosomal subunit protein uL6, found in Azoarcus sp. (strain BH72).